The following is a 577-amino-acid chain: Thrombomodulin (577 aa).

The N-terminal stretch at 1 to 16 is a signal peptide; it reads MLGIFFLGVLAPASLG. The Extracellular segment spans residues 17 to 517; it reads LSALAKLQPT…GPPSARPVHS (501 aa). Residues 31–167 enclose the C-type lectin domain; it reads VEHECFALFQ…TETQGFLCEF (137 aa). An N-linked (GlcNAc...) asparagine glycan is attached at asparagine 113. Cysteine 135 and cysteine 156 form a disulfide bridge. EGF-like domains are found at residues 240 to 280 and 283 to 323; these read GAWN…RSCA and VVQS…HRCE. A glycan (N-linked (GlcNAc...) asparagine) is linked at asparagine 243. Intrachain disulfides connect cysteine 244–cysteine 255, cysteine 251–cysteine 264, cysteine 266–cysteine 279, cysteine 287–cysteine 295, cysteine 291–cysteine 307, cysteine 309–cysteine 322, cysteine 328–cysteine 339, cysteine 335–cysteine 348, cysteine 350–cysteine 361, cysteine 368–cysteine 377, cysteine 373–cysteine 387, cysteine 389–cysteine 403, cysteine 407–cysteine 416, cysteine 412–cysteine 424, cysteine 426–cysteine 438, cysteine 444–cysteine 454, cysteine 449–cysteine 463, and cysteine 465–cysteine 479. Asparagine 256 carries an N-linked (GlcNAc...) asparagine glycan. An EGF-like 3; calcium-binding domain is found at 324 to 362; sequence DVDDCKQGPNPCPQLCVNTKGGFECFCYDGYELVDGECV. 2 EGF-like domains span residues 364–404 and 403–439; these read LLDP…HKCE and CEMF…SVCT. A glycan (N-linked (GlcNAc...) asparagine) is linked at asparagine 408. The EGF-like 6; calcium-binding domain maps to 440-480; the sequence is DIDECSQGECFTSECRNFPGSYECICGPDTALAGQISKDCD. The tract at residues 476–513 is disordered; that stretch reads SKDCDPIPVREDTKEEEGSGEPPVSPTPGSPTGPPSAR. Residues 477–492 are compositionally biased toward basic and acidic residues; sequence KDCDPIPVREDTKEEE. Serine 494 carries an O-linked (Xyl...) (chondroitin sulfate) serine glycan. Pro residues predominate over residues 498-512; it reads PVSPTPGSPTGPPSA. The chain crosses the membrane as a helical span at residues 518–541; sequence GVLIGISIASLSLVVALLALLCHL. Residues 542 to 577 are Cytoplasmic-facing; sequence RKKQGAARAELEYKCASSAKEVVLQHVRTDRTLQKF.

As to quaternary structure, interacts with ITGAL, ITGAM and ITGB2. Interacts with thrombin/F2; this interaction switches the specificity of thrombin from a procoagulant to an anticoagulant and antifibrinolytic protease. Interacts with ANGP1 and ANGP2; these interactions significantly inhibit the generation of activated PC and TAFIa/CPB2 by the thrombin/thrombomodulin complex. Interacts with PF4; this interaction enhances generation of activated protein C. Interacts with HMGB1; this interaction inhibits HMGB1 inflammatory activity. As to expression, endothelial cells are unique in synthesizing thrombomodulin.

The protein resides in the membrane. In terms of biological role, endothelial cell receptor that plays a critical role in regulating several physiological processes including hemostasis, coagulation, fibrinolysis, inflammation, and angiogenesis. Acts as a cofactor for thrombin activation of protein C/PROC on the surface of vascular endothelial cells leading to initiation of the activated protein C anticoagulant pathway. Also accelerates the activation of the plasma carboxypeptidase B2/CPB2, which catalyzes removal of C-terminal basic amino acids from its substrates including kinins or anaphylatoxins leading to fibrinolysis inhibition. Plays critical protective roles in changing the cleavage specificity of protease-activated receptor 1/PAR1, inhibiting endothelial cell permeability and inflammation. Suppresses inflammation distinctly from its anticoagulant cofactor activity by sequestering HMGB1 thereby preventing it from engaging cellular receptors such as RAGE and contributing to the inflammatory response. The protein is Thrombomodulin (Thbd) of Mus musculus (Mouse).